We begin with the raw amino-acid sequence, 1139 residues long: Replication protein alpha-A (1139 aa).

Positions Arg60–Ile438 are methyltransferase. The 225-residue stretch at Ser81–Val305 folds into the Alphavirus-like MT domain. The segment at Ser611 to Glu637 is disordered. Residues Ser617–Ser627 are compositionally biased toward low complexity. The region spanning Asp805–Lys969 is the (+)RNA virus helicase ATP-binding domain. Positions Leu835–Cys1109 are helicase. An ATP-binding site is contributed by Gly838–Ser845. The (+)RNA virus helicase C-terminal domain maps to Leu970–Val1139.

As to quaternary structure, interacts with the suppressor of RNA silencing Gamma-B (via C-terminus).

It is found in the host chloroplast envelope. The enzyme catalyses ATP + H2O = ADP + phosphate + H(+). Probably contains methyltransferase and helicase activities. Methyltransferase displays a cytoplasmic capping enzyme activity. This function is necessary since all viral RNAs are synthesized in the cytoplasm, and host capping enzymes are restricted to the nucleus. Helicase region probably exhibits NTPase and RNA unwinding activities. The polypeptide is Replication protein alpha-A (Barley stripe mosaic virus (BSMV)).